A 189-amino-acid polypeptide reads, in one-letter code: NADH-quinone oxidoreductase subunit B (189 aa).

Residues Cys-39, Cys-40, Cys-104, and Cys-135 each contribute to the [4Fe-4S] cluster site.

This sequence belongs to the complex I 20 kDa subunit family. In terms of assembly, NDH-1 is composed of 14 different subunits. Subunits NuoB, C, D, E, F, and G constitute the peripheral sector of the complex. [4Fe-4S] cluster is required as a cofactor.

It is found in the cell inner membrane. It carries out the reaction a quinone + NADH + 5 H(+)(in) = a quinol + NAD(+) + 4 H(+)(out). Functionally, NDH-1 shuttles electrons from NADH, via FMN and iron-sulfur (Fe-S) centers, to quinones in the respiratory chain. The immediate electron acceptor for the enzyme in this species is believed to be a menaquinone. Couples the redox reaction to proton translocation (for every two electrons transferred, four hydrogen ions are translocated across the cytoplasmic membrane), and thus conserves the redox energy in a proton gradient. This chain is NADH-quinone oxidoreductase subunit B, found in Chlorobium phaeobacteroides (strain DSM 266 / SMG 266 / 2430).